The primary structure comprises 237 residues: Ribosomal RNA small subunit methyltransferase G (237 aa).

Residues Gly78, Phe83, 129–130, and Arg148 each bind S-adenosyl-L-methionine; that span reads AE.

It belongs to the methyltransferase superfamily. RNA methyltransferase RsmG family.

It localises to the cytoplasm. Specifically methylates the N7 position of a guanine in 16S rRNA. The polypeptide is Ribosomal RNA small subunit methyltransferase G (Streptococcus pyogenes serotype M2 (strain MGAS10270)).